The sequence spans 492 residues: Bifunctional purine biosynthesis protein PurH (492 aa).

The MGS-like domain occupies 1-144 (MKKAILSVSN…KNYKHVTTIV (144 aa)).

This sequence belongs to the PurH family.

The enzyme catalyses (6R)-10-formyltetrahydrofolate + 5-amino-1-(5-phospho-beta-D-ribosyl)imidazole-4-carboxamide = 5-formamido-1-(5-phospho-D-ribosyl)imidazole-4-carboxamide + (6S)-5,6,7,8-tetrahydrofolate. It carries out the reaction IMP + H2O = 5-formamido-1-(5-phospho-D-ribosyl)imidazole-4-carboxamide. Its pathway is purine metabolism; IMP biosynthesis via de novo pathway; 5-formamido-1-(5-phospho-D-ribosyl)imidazole-4-carboxamide from 5-amino-1-(5-phospho-D-ribosyl)imidazole-4-carboxamide (10-formyl THF route): step 1/1. It functions in the pathway purine metabolism; IMP biosynthesis via de novo pathway; IMP from 5-formamido-1-(5-phospho-D-ribosyl)imidazole-4-carboxamide: step 1/1. The sequence is that of Bifunctional purine biosynthesis protein PurH from Staphylococcus aureus (strain USA300).